The following is an 807-amino-acid chain: Centrosomal protein of 97 kDa (807 aa).

LRR repeat units follow at residues 34 to 55 (DTQTLILDKNQIIKLEHVEKCR), 56 to 77 (NLVQLSVANNRLVRMMGVAKLI), 78 to 99 (HLRVLNLPHNSIGYVEGLKDLV), 100 to 121 (HLEWINLAGNNLKIIDQINSST), 122 to 143 (SLQHLDLSDNNISQIGDLSKLK), 144 to 165 (SLKTLLLHGNNIASLRAASACL), and 168 to 189 (SLTILSLAENEIRDLNEVAFLA). Positions 208–246 (TPSIPGFDYRPFIVSWCLNLKVLDGYVVSQKESLKAEWL) constitute an LRRCT domain. Positions 306–330 (RSDGYLTSSTPNKRLPLSTEHHSPT) are disordered. The IQ domain maps to 519–548 (ISKAATKLQSCWRGFYARKYNPKVKDVCYE). Polar residues predominate over residues 607–623 (TANSSENDLPSASNSKH). The disordered stretch occupies residues 607-756 (TANSSENDLP…RPEITTCSDN (150 aa)). Residues 681–690 (TGRHYNDKVP) are compositionally biased toward basic and acidic residues. Over residues 704 to 724 (SQSSKDSFTSEQDSSLLQQYL) the composition is skewed to polar residues.

Its subcellular location is the cytoplasm. The protein localises to the cytoskeleton. It is found in the microtubule organizing center. It localises to the centrosome. In terms of biological role, acts as a key negative regulator of ciliogenesis in collaboration with ccp110 by capping the mother centriole thereby preventing cilia formation. Required for recruitment of ccp110 to the centrosome. This chain is Centrosomal protein of 97 kDa (cep97), found in Xenopus laevis (African clawed frog).